The chain runs to 64 residues: p7b (64 aa).

At 1–12 (MECVCVDSSWPQ) the chain is on the cytoplasmic side. The chain crosses the membrane as a helical; Signal-anchor for type II membrane protein span at residues 13–30 (WLRNLILGILISSILFIL). Residues 31-64 (TKTQDTVAVYHEPSVYSIDQTQKFQKIDIHNGGK) lie on the Lumenal side of the membrane.

This sequence belongs to the gammacarmovirus double gene block protein 2 family.

Its subcellular location is the host endoplasmic reticulum membrane. In terms of biological role, required for cell-to-cell movement of virions in the host plant together with p7a. This Maize chlorotic mottle virus (isolate United States/Kansas/1987) (MCMV) protein is p7b.